The chain runs to 1305 residues: Contactin-associated protein like 5-3 (1305 aa).

Residues 1-24 form the signal peptide; it reads MDSVPRLNSVFTLVLSGLWHFGLT. Residues 25–174 form the F5/8 type C domain; it reads ATNYNCDDPL…IGMRVEVYGC (150 aa). Topologically, residues 25-1235 are extracellular; the sequence is ATNYNCDDPL…EPLTNAVPSD (1211 aa). Laminin G-like domains lie at 180 to 360 and 367 to 544; these read VADF…TFSC and PITF…IDLC. Asn-282 carries an N-linked (GlcNAc...) asparagine glycan. Cys-329 and Cys-360 form a disulfide bridge. Asn-496 carries N-linked (GlcNAc...) asparagine glycosylation. Intrachain disulfides connect Cys-512–Cys-544, Cys-550–Cys-561, and Cys-555–Cys-570. Residues 546-583 form the EGF-like 1 domain; that stretch reads IKDRCLPNYCEHGGQCAQTWTNFYCNCSDTGYTGATCH. Residue Asn-571 is glycosylated (N-linked (GlcNAc...) asparagine). A disulfide bridge connects residues Cys-572 and Cys-582. Residues 584-790 form the Fibrinogen C-terminal domain; the sequence is DSIYEQSCEV…LRCYGDRHFW (207 aa). Residues 791–956 form the Laminin G-like 3 domain; it reads NAVSFSTEAS…KVTSGVRPGC (166 aa). Disulfide bonds link Cys-929–Cys-956, Cys-960–Cys-973, Cys-967–Cys-982, and Cys-984–Cys-994. Residues 957–995 enclose the EGF-like 2 domain; the sequence is PGHCSSYGRNCQNGGKCVEKHIGYSCDCTNSPYEGPFCQ. Residues 1013–1198 enclose the Laminin G-like 4 domain; sequence QEPYSVTKNT…VQRTLTESSC (186 aa). Residues Asn-1023 and Asn-1057 are each glycosylated (N-linked (GlcNAc...) asparagine). A disulfide bond links Cys-1163 and Cys-1198. The helical transmembrane segment at 1236–1256 threads the bilayer; the sequence is LAVIGGIIAVVTFISFSVIGI. Topologically, residues 1257 to 1305 are cytoplasmic; that stretch reads MTHFFYQHKRSHYASQMKEKEYPENVDSSSRNDIDLQNTTRECKQEDFI.

The protein belongs to the neurexin family. As to expression, expressed in brain.

It is found in the membrane. Functionally, may play a role in the correct development and proper functioning of the peripheral and central nervous system and be involved in cell adhesion and intercellular communication. This chain is Contactin-associated protein like 5-3 (Cntnap5c), found in Mus musculus (Mouse).